Reading from the N-terminus, the 243-residue chain is DNA repair protein RecO (243 aa).

It belongs to the RecO family.

In terms of biological role, involved in DNA repair and RecF pathway recombination. The polypeptide is DNA repair protein RecO (Bartonella quintana (strain Toulouse) (Rochalimaea quintana)).